The sequence spans 165 residues: UPF0303 protein Bcep1808_1522 (165 aa).

This sequence belongs to the UPF0303 family.

This Burkholderia vietnamiensis (strain G4 / LMG 22486) (Burkholderia cepacia (strain R1808)) protein is UPF0303 protein Bcep1808_1522.